A 470-amino-acid chain; its full sequence is MSTNQGSLWGGRFAGGPSDALAALSKSTHFDWALAPYDVTASRAHAVVLFRAGLLTEEQRDGLLAGLDSLASDVADGSFGPLVSDEDVHAALERGLIERVGPDLGGRLRAGRSRNDQVATLFRMWLRDAVRRVATGVLEVVAALGDQAAAHPTAIMPGKTHLQSAQPILLAHHLLAHAHPLLRDVERIVDFDKRAAVSPYGSGALAGSSLGLDPDAIAADLGFTTAADNSVDATASRDFAAEAAFIFAMIAVDLSRLAEDIIIWSSTEFGYVTLHDSWSTGSSIMPQKKNPDIAELARGKSGRLIGNLTGLLATLKAQPLAYNRDLQEDKEPVFDSVVQLELLLPAMAGLVGSLTFDVERMAALAPAGYTLATDVAEWLVRQGVPFRSAHEAAGAAVRTAEERSVGLEELTDDELAAISPELTPQVRDVLTIEGSVSARDSRGGTAPKRVAEQLQIVREITARLGHELMR.

It belongs to the lyase 1 family. Argininosuccinate lyase subfamily.

The protein resides in the cytoplasm. The catalysed reaction is 2-(N(omega)-L-arginino)succinate = fumarate + L-arginine. The protein operates within amino-acid biosynthesis; L-arginine biosynthesis; L-arginine from L-ornithine and carbamoyl phosphate: step 3/3. This Mycobacterium marinum (strain ATCC BAA-535 / M) protein is Argininosuccinate lyase.